The primary structure comprises 88 residues: Small ribosomal subunit protein bS20 (88 aa).

The protein belongs to the bacterial ribosomal protein bS20 family.

Functionally, binds directly to 16S ribosomal RNA. The protein is Small ribosomal subunit protein bS20 of Renibacterium salmoninarum (strain ATCC 33209 / DSM 20767 / JCM 11484 / NBRC 15589 / NCIMB 2235).